A 92-amino-acid chain; its full sequence is Probable glutathione transferase (92 aa).

The 71-residue stretch at 1-71 folds into the GST N-terminal domain; that stretch reads RTCPYAQRAR…YLEEAFPDPP (71 aa). Residue C3 is the Nucleophile of the active site. Residues K30, V43, and 55 to 56 contribute to the glutathione site; that span reads ES.

The protein belongs to the GST superfamily. Omega family.

The enzyme catalyses RX + glutathione = an S-substituted glutathione + a halide anion + H(+). The catalysed reaction is L-dehydroascorbate + 2 glutathione = glutathione disulfide + L-ascorbate. It catalyses the reaction methylarsonate + 2 glutathione + H(+) = methylarsonous acid + glutathione disulfide + H2O. In terms of biological role, exhibits glutathione-dependent thiol transferase activity. Has dehydroascorbate reductase activity and may contribute to the recycling of ascorbic acid. Participates in the biotransformation of inorganic arsenic and reduces monomethylarsonic acid (MMA). This chain is Probable glutathione transferase, found in Aplysia californica (California sea hare).